A 212-amino-acid polypeptide reads, in one-letter code: Prolactin (212 aa).

A signal peptide spans 1–24; sequence MAHRETNGSKLFITVLCMVAACSA. Cystine bridges form between Cys-70–Cys-185 and Cys-202–Cys-212.

It belongs to the somatotropin/prolactin family.

The protein resides in the secreted. The protein is Prolactin (prl) of Sparus aurata (Gilthead sea bream).